Reading from the N-terminus, the 101-residue chain is NADH-quinone oxidoreductase subunit K 1 (101 aa).

A run of 3 helical transmembrane segments spans residues 4–24, 31–51, and 64–84; these read IGTM…TVGV, VVIL…LVAF, and IFVM…VIAF.

This sequence belongs to the complex I subunit 4L family. As to quaternary structure, NDH-1 is composed of 14 different subunits. Subunits NuoA, H, J, K, L, M, N constitute the membrane sector of the complex.

The protein resides in the cell inner membrane. It carries out the reaction a quinone + NADH + 5 H(+)(in) = a quinol + NAD(+) + 4 H(+)(out). Functionally, NDH-1 shuttles electrons from NADH, via FMN and iron-sulfur (Fe-S) centers, to quinones in the respiratory chain. The immediate electron acceptor for the enzyme in this species is believed to be ubiquinone. Couples the redox reaction to proton translocation (for every two electrons transferred, four hydrogen ions are translocated across the cytoplasmic membrane), and thus conserves the redox energy in a proton gradient. The sequence is that of NADH-quinone oxidoreductase subunit K 1 from Koribacter versatilis (strain Ellin345).